Consider the following 878-residue polypeptide: Phosphoenolpyruvate carboxylase (878 aa).

Active-site residues include histidine 138 and lysine 545.

It belongs to the PEPCase type 1 family. Mg(2+) is required as a cofactor.

The catalysed reaction is oxaloacetate + phosphate = phosphoenolpyruvate + hydrogencarbonate. Forms oxaloacetate, a four-carbon dicarboxylic acid source for the tricarboxylic acid cycle. The chain is Phosphoenolpyruvate carboxylase from Shewanella loihica (strain ATCC BAA-1088 / PV-4).